A 238-amino-acid chain; its full sequence is Chorionic somatomammotropin hormone 2 (238 aa).

The signal sequence occupies residues 1–36; it reads MAPAPSFRGHQWTYNPVRGSCLLLLLVVSNLLLCQG. Histidine 66 lines the Zn(2+) pocket. N-linked (GlcNAc...) asparagine glycans are attached at residues asparagine 70, asparagine 92, asparagine 146, and asparagine 160. Cysteine 97 and cysteine 215 are joined by a disulfide. Aspartate 224 is a Zn(2+) binding site. Cysteines 232 and 238 form a disulfide.

This sequence belongs to the somatotropin/prolactin family.

It localises to the secreted. This Bos taurus (Bovine) protein is Chorionic somatomammotropin hormone 2 (CSH2).